The primary structure comprises 122 residues: Fluoride-specific ion channel FluC (122 aa).

The next 4 membrane-spanning stretches (helical) occupy residues Ile4–Ile24, Leu36–Gly56, Phe65–Phe85, and Ile100–Phe120. Na(+)-binding residues include Gly72 and Thr75.

It belongs to the fluoride channel Fluc/FEX (TC 1.A.43) family.

The protein localises to the cell membrane. The catalysed reaction is fluoride(in) = fluoride(out). Na(+) is not transported, but it plays an essential structural role and its presence is essential for fluoride channel function. Its function is as follows. Fluoride-specific ion channel. Important for reducing fluoride concentration in the cell, thus reducing its toxicity. This chain is Fluoride-specific ion channel FluC, found in Methanococcus maripaludis (strain DSM 14266 / JCM 13030 / NBRC 101832 / S2 / LL).